A 629-amino-acid polypeptide reads, in one-letter code: tRNA uridine 5-carboxymethylaminomethyl modification enzyme MnmG (629 aa).

Residue 11–16 participates in FAD binding; it reads GGGHAG. An NAD(+)-binding site is contributed by 273–287; sequence GPRYCPSFEDKVVRF.

It belongs to the MnmG family. In terms of assembly, homodimer. Heterotetramer of two MnmE and two MnmG subunits. FAD serves as cofactor.

The protein resides in the cytoplasm. Functionally, NAD-binding protein involved in the addition of a carboxymethylaminomethyl (cmnm) group at the wobble position (U34) of certain tRNAs, forming tRNA-cmnm(5)s(2)U34. This chain is tRNA uridine 5-carboxymethylaminomethyl modification enzyme MnmG, found in Mycoplasma capricolum subsp. capricolum (strain California kid / ATCC 27343 / NCTC 10154).